A 166-amino-acid chain; its full sequence is Large ribosomal subunit protein bL19 (166 aa).

It belongs to the bacterial ribosomal protein bL19 family.

Functionally, this protein is located at the 30S-50S ribosomal subunit interface and may play a role in the structure and function of the aminoacyl-tRNA binding site. This Chelativorans sp. (strain BNC1) protein is Large ribosomal subunit protein bL19.